The primary structure comprises 989 residues: Mediator of RNA polymerase II transcription subunit 24 (989 aa).

Short sequence motifs (LXXLL motif) lie at residues 128–132 (LHWLL), 344–348 (LTPLL), 448–452 (LDLLL), 557–561 (LVALL), 788–792 (LPGLL), and 857–861 (LMRLL). Phosphoserine occurs at positions 862 and 873.

Belongs to the Mediator complex subunit 24 family. As to quaternary structure, component of the Mediator complex, which is composed of MED1, MED4, MED6, MED7, MED8, MED9, MED10, MED11, MED12, MED13, MED13L, MED14, MED15, MED16, MED17, MED18, MED19, MED20, MED21, MED22, MED23, MED24, MED25, MED26, MED27, MED29, MED30, MED31, CCNC, CDK8 and CDC2L6/CDK11. The MED12, MED13, CCNC and CDK8 subunits form a distinct module termed the CDK8 module. Mediator containing the CDK8 module is less active than Mediator lacking this module in supporting transcriptional activation. Individual preparations of the Mediator complex lacking one or more distinct subunits have been variously termed ARC, CRSP, DRIP, PC2, SMCC and TRAP. Interacts with AR. In terms of tissue distribution, ubiquitous. Abundant in skeletal muscle, heart and placenta.

It localises to the nucleus. Component of the Mediator complex, a coactivator involved in the regulated transcription of nearly all RNA polymerase II-dependent genes. Mediator functions as a bridge to convey information from gene-specific regulatory proteins to the basal RNA polymerase II transcription machinery. Mediator is recruited to promoters by direct interactions with regulatory proteins and serves as a scaffold for the assembly of a functional preinitiation complex with RNA polymerase II and the general transcription factors. The sequence is that of Mediator of RNA polymerase II transcription subunit 24 (MED24) from Homo sapiens (Human).